Here is a 161-residue protein sequence, read N- to C-terminus: Phosphopantetheine adenylyltransferase (161 aa).

Position 9 (serine 9) interacts with substrate. ATP contacts are provided by residues 9-10 (SF) and histidine 17. Residues lysine 41, valine 73, and lysine 87 each contribute to the substrate site. Residues 88–90 (GLR), glutamate 98, and 122–128 (YSFVSSS) each bind ATP.

Belongs to the bacterial CoaD family. In terms of assembly, homohexamer. The cofactor is Mg(2+).

The protein localises to the cytoplasm. The enzyme catalyses (R)-4'-phosphopantetheine + ATP + H(+) = 3'-dephospho-CoA + diphosphate. It functions in the pathway cofactor biosynthesis; coenzyme A biosynthesis; CoA from (R)-pantothenate: step 4/5. Functionally, reversibly transfers an adenylyl group from ATP to 4'-phosphopantetheine, yielding dephospho-CoA (dPCoA) and pyrophosphate. This Mycobacterium bovis (strain ATCC BAA-935 / AF2122/97) protein is Phosphopantetheine adenylyltransferase.